A 790-amino-acid polypeptide reads, in one-letter code: MELSEGELSHTSSSSSFVPVDQRQLQDAIQIIDENKHFNTGILDYINKTSPADVGNNYHIISVFGSQSTGKSTLLNRLFNTNFDVMDESNRQQTTKGIWLAYSPVVSTTLGHTTSKSNILVMDVEGTDGRERGEDQDFERKAALFALSTSEVLIINIWETQVGLYQGANMGLLKTVFEVNLSLFGKSKLETHNDHKVLLLIVIRDHVGVTPVESLAKTFTSDLQNMWSSLAKPAELEHLQFADFFDVTFHALNHKVLQPKEFGEGINRLGDRLVVSNELFKPEYHHDVPIDGWTMYAERCWEQIETNKDLDLPTQQILVAQFKCDEIVESVFQEFLAKYQHHFKEVDAAPDFEELGALFADLRQDAFEDYDASASRYNKAVYEQKRKKLRWLINDKLKEVFDVHAKNLCNTLLEKFEKDLVALKGKDFAVNVKTLSTKLVEDVNFQVSLMSLQGDLSLDEIILALTKDIDAIVAKQQVIELNSIVNKSVKKLSASLSKSIQFELGDPNEETWDNVLQQFKGVYEKFGGDFGLGTSSTQNQQAIEKFKFKSWCQFYDVTHKLISREKLLALLQDRFDDKFRYDENGLPKLYLNEQDLEKTFAVAKQHALQVLPILTFAKLTDGSEIVPDYDIFDSKLREQFLGGYDDSDDEEDHCFAEIITEQEKSEVLAKFKKEVDAKYIETKRSIVQHITQIPYYIYLIILVLGWNEFMAIIRNPLFFSLSIVLGATVYVLYYLGLLRPALVVAQRTMDEVIVMAKTKLREVLIDDHEVTGRQLNKMAGSKENIELDDM.

At 1 to 692 (MELSEGELSH…KRSIVQHITQ (692 aa)) the chain is on the cytoplasmic side. Residues 55-284 (GNNYHIISVF…VSNELFKPEY (230 aa)) form the GB1/RHD3-type G domain. A GTP-binding site is contributed by 65 to 72 (GSQSTGKS). The chain crosses the membrane as a helical span at residues 693-713 (IPYYIYLIILVLGWNEFMAII). The Lumenal segment spans residues 714-716 (RNP). Residues 717–737 (LFFSLSIVLGATVYVLYYLGL) form a helical membrane-spanning segment. The Cytoplasmic portion of the chain corresponds to 738–790 (LRPALVVAQRTMDEVIVMAKTKLREVLIDDHEVTGRQLNKMAGSKENIELDDM).

The protein belongs to the TRAFAC class dynamin-like GTPase superfamily. GB1/RHD3 GTPase family. RHD3 subfamily.

Its subcellular location is the endoplasmic reticulum membrane. Functionally, cooperates with the reticulon proteins and tubule-shaping DP1 family proteins to generate and maintain the structure of the tubular endoplasmic reticulum network. Has GTPase activity, which is required for its function in ER organization. This chain is Protein SEY1, found in Candida albicans (strain WO-1) (Yeast).